The chain runs to 966 residues: Catenin alpha-2 (966 aa).

Residues 924-940 (PEKKPLVKREKPEEYQT) are compositionally biased toward basic and acidic residues. The tract at residues 924-952 (PEKKPLVKREKPEEYQTRVRRGSQKKHIS) is disordered. Residues 941–951 (RVRRGSQKKHI) are compositionally biased toward basic residues.

Belongs to the vinculin/alpha-catenin family.

It is found in the cell membrane. The protein resides in the cytoplasm. The protein localises to the cytoskeleton. Its subcellular location is the cell junction. It localises to the adherens junction. It is found in the cell projection. The protein resides in the axon. The protein localises to the nucleus. Its function is as follows. May function as a linker between cadherin adhesion receptors and the cytoskeleton to regulate cell-cell adhesion and differentiation in the nervous system. In Xenopus tropicalis (Western clawed frog), this protein is Catenin alpha-2 (ctnna2).